The chain runs to 559 residues: Pentatricopeptide repeat-containing protein At1g08610 (559 aa).

PPR repeat units lie at residues 103–137, 138–172, 173–207, 208–242, 243–277, 278–312, 313–347, 348–382, 383–417, 418–452, 453–487, 488–522, and 523–557; these read DEETNNEILHNLCSNGKLTDACKLVEVMARHNQVP, HFPSCSNLVRGLARIDQLDKAMCILRVMVMSGGVP, DTITYNMIIGNLCKKGHIRTALVLLEDMSLSGSPP, DVITYNTVIRCMFDYGNAEQAIRFWKDQLQNGCPP, FMITYTVLVELVCRYCGSARAIEVLEDMAVEGCYP, DIVTYNSLVNYNCRRGNLEEVASVIQHILSHGLEL, NTVTYNTLLHSLCSHEYWDEVEEILNIMYQTSYCP, TVITYNILINGLCKARLLSRAIDFFYQMLEQKCLP, DIVTYNTVLGAMSKEGMVDDAIELLGLLKNTCCPP, GLITYNSVIDGLAKKGLMKKALELYHQMLDAGIFP, DDITRRSLIYGFCRANLVEEAGQVLKETSNRGNGI, RGSTYRLVIQGLCKKKEIEMAIEVVEIMLTGGCKP, and DETIYTAIVKGVEEMGMGSEAVQLQKKLKQWKLLK.

It belongs to the PPR family. P subfamily.

The sequence is that of Pentatricopeptide repeat-containing protein At1g08610 from Arabidopsis thaliana (Mouse-ear cress).